A 321-amino-acid chain; its full sequence is Acyl-CoA 5-desaturase AL21 (321 aa).

2 consecutive transmembrane segments (helical) span residues 42–62 and 64–84; these read IFHI…PFTF and WSAF…GTTL. 5 residues coordinate Fe cation: H87, H92, H124, H127, and H128. The short motif at 87–92 is the Histidine box-1 element; it reads HRNLTH. The short motif at 124–128 is the Histidine box-2 element; the sequence is HRYHH. A helical membrane pass occupies residues 190–210; that stretch reads LQAALLYMFGGFPFIVWGMAV. Positions 227, 256, 259, and 260 each coordinate Fe cation. A Histidine box-3 motif is present at residues 256 to 260; that stretch reads HNNHH.

Belongs to the fatty acid desaturase type 1 family. Fe(2+) serves as cofactor.

It is found in the membrane. The enzyme catalyses (11Z,14Z)-eicosadienoyl-CoA + AH2 + O2 = (5Z,11Z,14Z)-eicosatrienoyl-CoA + A + 2 H2O. The catalysed reaction is (11Z,14Z,17Z)-eicosatrienoyl-CoA + AH2 + O2 = (5Z,11Z,14Z,17Z)-eicosatetraenoyl-CoA + A + 2 H2O. The protein operates within lipid metabolism; polyunsaturated fatty acid biosynthesis. Its function is as follows. Catalyzes the desaturation of 20:2Delta(11,14) and 20:3Delta(11,14,17) to generate sciadonic acid (20:3Delta(5,11,14)) and juniperonic acid (20:4Delta(5,11,14,17)). The enzyme can also use 16:0 and 18:0 as substrates. This Anemone leveillei (Windflower) protein is Acyl-CoA 5-desaturase AL21.